Reading from the N-terminus, the 127-residue chain is Small ribosomal subunit protein bS6 (127 aa).

This sequence belongs to the bacterial ribosomal protein bS6 family.

Functionally, binds together with bS18 to 16S ribosomal RNA. The chain is Small ribosomal subunit protein bS6 from Buchnera aphidicola subsp. Cinara cedri (strain Cc).